The primary structure comprises 166 residues: UPF0303 protein Avin_29320 (166 aa).

This sequence belongs to the UPF0303 family.

This is UPF0303 protein Avin_29320 from Azotobacter vinelandii (strain DJ / ATCC BAA-1303).